The sequence spans 291 residues: Verruculogen synthase (291 aa).

This sequence belongs to the PhyH family. As to quaternary structure, homodimer. The cofactor is Fe cation.

The enzyme catalyses fumitremorgin B + 2-oxoglutarate + AH2 + 2 O2 = verruculogen + succinate + A + CO2 + H2O. Its pathway is mycotoxin biosynthesis. Verruculogen synthase; part of the gene cluster that mediates the biosynthesis of fumitremorgins, indole alkaloids that carry not only intriguing chemical structures, but also interesting biological and pharmacological activities. The biosynthesis of fumitremorgin-type alkaloids begins by condensation of the two amino acids L-tryptophan and L-proline to brevianamide F, catalyzed by the non-ribosomal peptide synthetase ftmPS/ftmA. Brevianamide F is then prenylated by the prenyltransferase ftmPT1/ftmB in the presence of dimethylallyl diphosphate, resulting in the formation of tryprostatin B. The three cytochrome P450 monooxygenases, ftmP450-1/ftmC, ftmP450-2/ftmE and ftmP450-3/FtmG, are responsible for the conversion of tryprostatin B to 6-hydroxytryprostatin B, tryprostatin A to fumitremorgin C and fumitremorgin C to 12,13-dihydroxyfumitremorgin C, respectively. The putative methyltransferase ftmMT/ftmD is expected for the conversion of 6-hydroxytryprostatin B to tryprostatin A. FtmPT2/FtmH catalyzes the prenylation of 12,13-dihydroxyfumitre-morgin C in the presence of dimethylallyl diphosphate, resulting in the formation of fumitremorgin B. Fumitremorgin B is further converted to verruculogen by ftmOx1/ftmF via the insertion of an endoperoxide bond between the two prenyl moieties. Finally, verruculogen is further converted to fumitremorgin A by the verruculogen prenyltransferase ftmPT3. The protein is Verruculogen synthase of Neosartorya fischeri (strain ATCC 1020 / DSM 3700 / CBS 544.65 / FGSC A1164 / JCM 1740 / NRRL 181 / WB 181) (Aspergillus fischerianus).